The chain runs to 437 residues: Enolase 2 (437 aa).

Residue K60 forms a Glycyl lysine isopeptide (Lys-Gly) (interchain with G-Cter in ubiquitin) linkage. At S138 the chain carries Phosphoserine. Residue H160 is part of the active site. Phosphoserine is present on S188. Residue K243 forms a Glycyl lysine isopeptide (Lys-Gly) (interchain with G-Cter in ubiquitin) linkage. Residues D247 and E296 each coordinate Mg(2+). T313 is modified (phosphothreonine). D321 is a binding site for Mg(2+). T324 carries the phosphothreonine modification. A Glycyl lysine isopeptide (Lys-Gly) (interchain with G-Cter in ubiquitin) cross-link involves residue K358.

It belongs to the enolase family. In terms of assembly, homodimer. It depends on Mg(2+) as a cofactor.

It localises to the cytoplasm. It carries out the reaction (2R)-2-phosphoglycerate = phosphoenolpyruvate + H2O. It functions in the pathway carbohydrate degradation; glycolysis; pyruvate from D-glyceraldehyde 3-phosphate: step 4/5. The polypeptide is Enolase 2 (ENO2) (Saccharomyces cerevisiae (strain ATCC 204508 / S288c) (Baker's yeast)).